The following is an 870-amino-acid chain: MPTNSYRFLVASEDIYFQNTLQQSITFSDPESIKVLKDFYHSNSRPTLTNKDFLIVYRKEKEKDTKKKNSSVIKFPRNDFNSFEDSKNDIQNQAKILNGKVGDFENSLLPRIYDLDELSKYASLARIQSYRAKTSPDKSEWQTVILDFIVTEKVQLVELINDPQNPKVGQIIIKPVRETIKSPEIHINLINDLLEMARKAKNFRIPTELLLIVDKFGANSEYSTNEYIKGVTNTLSCSPSLTYPQKYQLFSYNSYPAKIKKLYEHIHTFAEQIKLEDEINVILKTNLDKQQTEFILKEKIKAIRKKLGEDSRYEDEIEELLHSELGKKVFPKEVAKTIMRETNKLKSMIVTSPESNITKSYLDLLVALPWKKVKKDILDIKNVREKLEEAHYGLDEIKKRIIEYLAALIHRRSQSEGKPELEKVGSDYIDSNLFLSHKIRKVRSNSIPILTLVGPPGTGKTSIAMAVAEAIGKEFVKISLGGIRDEAEIRGHRRTYVGALPGKIIQALKKVGVSNPLILLDEIDKMGADFKGDPSAAMLEVLDPEQNRFFQDHYLELEYDLSQVLFVATANEIYDIPEPLLDRVEIIELSSYTFIEKIQIAKSHLIPAVLKENALDPKYFPIQDQTIDFLIRHYTREAGVRGLKRVIDKIVRKIIVKLLEKTLDQNFVIDIEFVRELLGIEKYDPDNVDSSPQIGTVTGLGYSPLGGSTLQIEVSTIPGRGDIKLTGSLKDVMQESARIALSYVQSKAKDFGINFDFENTLIHIHVPEGAIPKDGPSAGITFATAIISALSQKPVSHNIAMTGEITLRGKVLAIGGLKEKTMGAYKNGIKIIFIPKANEKNLVDIPQEVKDVIQFIPVDTYQQIYDFIFK.

A Lon N-terminal domain is found at 1 to 270 (MPTNSYRFLV…KLYEHIHTFA (270 aa)). 454–461 (GPPGTGKT) contacts ATP. The Lon proteolytic domain maps to 691–870 (SPQIGTVTGL…YQQIYDFIFK (180 aa)). Catalysis depends on residues serine 777 and lysine 820.

Belongs to the peptidase S16 family. In terms of assembly, homohexamer. Organized in a ring with a central cavity.

The protein resides in the cytoplasm. It catalyses the reaction Hydrolysis of proteins in presence of ATP.. In terms of biological role, ATP-dependent serine protease that mediates the selective degradation of mutant and abnormal proteins as well as certain short-lived regulatory proteins. Required for cellular homeostasis and for survival from DNA damage and developmental changes induced by stress. Degrades polypeptides processively to yield small peptide fragments that are 5 to 10 amino acids long. Binds to DNA in a double-stranded, site-specific manner. The sequence is that of Lon protease from Mesomycoplasma hyopneumoniae (strain 232) (Mycoplasma hyopneumoniae).